Reading from the N-terminus, the 365-residue chain is DNA replication and repair protein RecF (365 aa).

Residue 30-37 coordinates ATP; that stretch reads GLNAQGKT.

Belongs to the RecF family.

The protein resides in the cytoplasm. In terms of biological role, the RecF protein is involved in DNA metabolism; it is required for DNA replication and normal SOS inducibility. RecF binds preferentially to single-stranded, linear DNA. It also seems to bind ATP. This Chlamydia trachomatis serovar A (strain ATCC VR-571B / DSM 19440 / HAR-13) protein is DNA replication and repair protein RecF.